A 146-amino-acid chain; its full sequence is uncharacterized protein (146 aa).

This is an uncharacterized protein from Acidianus filamentous virus 2 (isolate Italy/Pozzuoli) (AFV-2).